A 1219-amino-acid chain; its full sequence is DNA ligase 4 (1219 aa).

Residues Glu251, Lys253, Arg258, Arg273, Glu303, Phe342, Glu418, Lys423, Arg434, Lys440, and Lys442 each contribute to the ATP site. Lys253 functions as the N6-AMP-lysine intermediate in the catalytic mechanism. A Mg(2+)-binding site is contributed by Glu303. Mg(2+) is bound at residue Glu418. Positions 604 to 632 are disordered; sequence NGTTQKQKESESTQDNPKVNKSSKRGEKK. BRCT domains follow at residues 651-739 and 807-909; these read GKTS…PKYF and VYFY…VYTL. Disordered regions lie at residues 914–1126 and 1146–1197; these read MEES…MDMK and IPSQ…SDVV. Over residues 932–960 the composition is skewed to polar residues; the sequence is VASQGSAQTKEPASSKIAITSSRGRSNTR. Residues 1042–1051 show a composition bias toward basic residues; sequence QRSRRGKKAA. Acidic residues predominate over residues 1056–1065; sequence DESDENDELD. Basic and acidic residues-rich tracts occupy residues 1084–1096 and 1117–1126; these read VENE…DIAK and RNAKTEMDMK. The span at 1148–1159 shows a compositional bias: polar residues; sequence SQKTTETSNRTT.

This sequence belongs to the ATP-dependent DNA ligase family. In terms of assembly, interacts with XRCC4 via its tandem BRCT domains. Interacts with POLL. Mg(2+) is required as a cofactor. Widely expressed, with higher levels in young flowers and roots.

The protein localises to the nucleus. It carries out the reaction ATP + (deoxyribonucleotide)n-3'-hydroxyl + 5'-phospho-(deoxyribonucleotide)m = (deoxyribonucleotide)n+m + AMP + diphosphate.. In terms of biological role, DNA ligase involved in DNA non-homologous end joining (NHEJ); required for double-strand break (DSB) repair. May be involved for T-DNA integration even if not absolutely required. Seems to be dispensable under normal growth conditions. This Arabidopsis thaliana (Mouse-ear cress) protein is DNA ligase 4 (LIG4).